Consider the following 402-residue polypeptide: S-adenosylmethionine synthase (402 aa).

ATP is bound at residue 137–142 (GQGSAD).

This sequence belongs to the AdoMet synthase 2 family. It depends on Mg(2+) as a cofactor.

It catalyses the reaction L-methionine + ATP + H2O = S-adenosyl-L-methionine + phosphate + diphosphate. It functions in the pathway amino-acid biosynthesis; S-adenosyl-L-methionine biosynthesis; S-adenosyl-L-methionine from L-methionine: step 1/1. Its function is as follows. Catalyzes the formation of S-adenosylmethionine from methionine and ATP. The polypeptide is S-adenosylmethionine synthase (Pyrobaculum aerophilum (strain ATCC 51768 / DSM 7523 / JCM 9630 / CIP 104966 / NBRC 100827 / IM2)).